Here is a 64-residue protein sequence, read N- to C-terminus: Large ribosomal subunit protein uL30 (64 aa).

A disordered region spans residues 1 to 22; that stretch reads MAKAAKTIKVEQTGSAIRRHHS.

This sequence belongs to the universal ribosomal protein uL30 family. In terms of assembly, part of the 50S ribosomal subunit.

The sequence is that of Large ribosomal subunit protein uL30 from Nitrobacter winogradskyi (strain ATCC 25391 / DSM 10237 / CIP 104748 / NCIMB 11846 / Nb-255).